A 125-amino-acid chain; its full sequence is Neuraminyllactose-binding hemagglutinin (125 aa).

The segment at 92–97 (KRTTQK) is N-acetyl-neuraminyl-alpha(2,3)-lactose binding motif.

It localises to the cell outer membrane. In Helicobacter acinonychis (Helicobacter acinonyx), this protein is Neuraminyllactose-binding hemagglutinin (hpaA).